The chain runs to 916 residues: DNA gyrase subunit A (916 aa).

One can recognise a Topo IIA-type catalytic domain in the interval 42-544 (LPDVRDGLKP…FGGDIADEDL (503 aa)). The active-site O-(5'-phospho-DNA)-tyrosine intermediate is Y130. The short motif at 571–577 (QRRGGRG) is the GyrA-box element. The segment covering 739–748 (SDDLEDETAD) has biased composition (acidic residues). Disordered stretches follow at residues 739–774 (SDDLEDETADNENTLPSGKNGVRPSGRGSGGLRGMR) and 897–916 (ESELSGASVISNVTEPEAEN).

The protein belongs to the type II topoisomerase GyrA/ParC subunit family. As to quaternary structure, heterotetramer, composed of two GyrA and two GyrB chains. In the heterotetramer, GyrA contains the active site tyrosine that forms a transient covalent intermediate with DNA, while GyrB binds cofactors and catalyzes ATP hydrolysis.

The protein localises to the cytoplasm. It catalyses the reaction ATP-dependent breakage, passage and rejoining of double-stranded DNA.. A type II topoisomerase that negatively supercoils closed circular double-stranded (ds) DNA in an ATP-dependent manner to modulate DNA topology and maintain chromosomes in an underwound state. Negative supercoiling favors strand separation, and DNA replication, transcription, recombination and repair, all of which involve strand separation. Also able to catalyze the interconversion of other topological isomers of dsDNA rings, including catenanes and knotted rings. Type II topoisomerases break and join 2 DNA strands simultaneously in an ATP-dependent manner. The chain is DNA gyrase subunit A from Neisseria gonorrhoeae.